Consider the following 209-residue polypeptide: Ribosomal RNA large subunit methyltransferase E (209 aa).

S-adenosyl-L-methionine contacts are provided by Gly-63, Trp-65, Asp-83, Asp-99, and Asp-124. Lys-164 (proton acceptor) is an active-site residue.

It belongs to the class I-like SAM-binding methyltransferase superfamily. RNA methyltransferase RlmE family.

The protein localises to the cytoplasm. The catalysed reaction is uridine(2552) in 23S rRNA + S-adenosyl-L-methionine = 2'-O-methyluridine(2552) in 23S rRNA + S-adenosyl-L-homocysteine + H(+). Its function is as follows. Specifically methylates the uridine in position 2552 of 23S rRNA at the 2'-O position of the ribose in the fully assembled 50S ribosomal subunit. The chain is Ribosomal RNA large subunit methyltransferase E from Shewanella piezotolerans (strain WP3 / JCM 13877).